A 139-amino-acid polypeptide reads, in one-letter code: MGKLNKTEREWQRELSPEEYRITRQKGTEPAFTGQYWNTKQSGTYVCRCCGTELFSSISKYDSGCGWPSFYKPINTTAIEEHDDFSHGMVRTEIVCHHCDAHLGHVFEDGPQPTGLRYCVNSASLQLKTDEKNDEETYP.

The MsrB domain maps to 8-130; sequence EREWQRELSP…NSASLQLKTD (123 aa). Zn(2+) is bound by residues Cys-47, Cys-50, Cys-96, and Cys-99. Cys-119 functions as the Nucleophile in the catalytic mechanism.

Belongs to the MsrB Met sulfoxide reductase family. It depends on Zn(2+) as a cofactor.

It catalyses the reaction L-methionyl-[protein] + [thioredoxin]-disulfide + H2O = L-methionyl-(R)-S-oxide-[protein] + [thioredoxin]-dithiol. This Acinetobacter baylyi (strain ATCC 33305 / BD413 / ADP1) protein is Peptide methionine sulfoxide reductase MsrB.